Here is a 563-residue protein sequence, read N- to C-terminus: Coiled-coil domain-containing protein 38 (563 aa).

Residues 128 to 211 (TKKKTIKRFE…SIKSDIAKTE (84 aa)) are a coiled coil. Residues 265 to 310 (DNSIDSDKMSVSEEWSSRRGSQGGRHGKHTLGQDSRKSSGFTRPES) form a disordered region. Basic and acidic residues predominate over residues 269 to 281 (DSDKMSVSEEWSS). 2 coiled-coil regions span residues 361-415 (QDVD…RSRL) and 454-522 (NAVQ…AVAQ). The tract at residues 543–563 (QELLLVSDTRSKSQDEEYFFS) is disordered.

As to quaternary structure, interacts with CCDC42, CFAP53, IFT88 and ODF2. Interacts with CCDC146. Interacts with TEKT3. Interacts with ubiquitinated histone H2A. In terms of tissue distribution, expressed exclusively in testis where it is detected mainly in spermatogonia and spermatocytes (at protein level).

The protein resides in the cytoplasm. Its subcellular location is the cytoskeleton. It localises to the microtubule organizing center. It is found in the centrosome. The protein localises to the perinuclear region. The protein resides in the cell projection. Its subcellular location is the cilium. It localises to the flagellum. Functionally, essential for male fertility. Required for sperm flagellum biogenesis. Also required for acrosome biogenesis. Required for the attachment of developing acrosomes to the nucleus during spermiogenesis and may be involved in the transport of fibrous sheath components. The sequence is that of Coiled-coil domain-containing protein 38 (Ccdc38) from Mus musculus (Mouse).